The primary structure comprises 761 residues: Wall-associated receptor kinase-like 4 (761 aa).

A signal peptide spans 1–26; the sequence is MKKETQNLQCIPLVISVLSLFGVSSA. Residues 27–349 lie on the Extracellular side of the membrane; it reads RKPPYLCNRV…EPKKPGQIKP (323 aa). N-linked (GlcNAc...) asparagine glycosylation is found at Asn64, Asn166, Asn206, Asn226, and Asn262. The segment at 278 to 339 is atypical EGF-like; sequence CVCSYGYFSG…CVNKPGWFTC (62 aa). Intrachain disulfides connect Cys280–Cys293, Cys316–Cys330, and Cys325–Cys339. The helical transmembrane segment at 350–370 threads the bilayer; sequence VFQGVLIGSALLLFAFGIFGL. Over 371 to 761 the chain is Cytoplasmic; the sequence is YKFIKKQRRS…VEPLVPLRTW (391 aa). The 274-residue stretch at 424 to 697 folds into the Protein kinase domain; the sequence is FNTNRVLGQG…REVSVELERI (274 aa). ATP contacts are provided by residues 430–438 and Lys452; that span reads LGQGGQGTV. Tyr497 bears the Phosphotyrosine mark. Asp549 (proton acceptor) is an active-site residue. Phosphothreonine occurs at positions 583 and 588. At Tyr596 the chain carries Phosphotyrosine. A disordered region spans residues 701–761; it reads SYKSEIHNDD…VEPLVPLRTW (61 aa). Residues 708–732 show a composition bias toward acidic residues; the sequence is NDDDDDDDDDDEDDQAMELNIEETW.

The protein belongs to the protein kinase superfamily. Ser/Thr protein kinase family. Expressed in the whole plant. Detected in root-shoot junctions and lateral root initiation sites.

The protein localises to the membrane. The catalysed reaction is L-seryl-[protein] + ATP = O-phospho-L-seryl-[protein] + ADP + H(+). The enzyme catalyses L-threonyl-[protein] + ATP = O-phospho-L-threonyl-[protein] + ADP + H(+). Functionally, serine/threonine-protein kinase that may function as a signaling receptor of extracellular matrix component. Plays a role in plant mineral nutrients response. This Arabidopsis thaliana (Mouse-ear cress) protein is Wall-associated receptor kinase-like 4 (WAKL4).